A 367-amino-acid polypeptide reads, in one-letter code: Uroporphyrinogen decarboxylase (367 aa).

Residues 28 to 32 (RQAGR), aspartate 78, tyrosine 158, threonine 213, and histidine 334 contribute to the substrate site.

Belongs to the uroporphyrinogen decarboxylase family. Homodimer.

The protein resides in the cytoplasm. The catalysed reaction is uroporphyrinogen III + 4 H(+) = coproporphyrinogen III + 4 CO2. It participates in porphyrin-containing compound metabolism; protoporphyrin-IX biosynthesis; coproporphyrinogen-III from 5-aminolevulinate: step 4/4. Functionally, catalyzes the decarboxylation of four acetate groups of uroporphyrinogen-III to yield coproporphyrinogen-III. This Ralstonia pickettii (strain 12J) protein is Uroporphyrinogen decarboxylase.